The sequence spans 241 residues: Enolase-phosphatase E1 (241 aa).

2 residues coordinate Mg(2+): aspartate 9 and glutamate 11. Residues 133–134 (SS) and lysine 172 each bind substrate. Aspartate 198 contacts Mg(2+).

Belongs to the HAD-like hydrolase superfamily. MasA/MtnC family. As to quaternary structure, monomer. Requires Mg(2+) as cofactor.

It is found in the cytoplasm. The protein localises to the nucleus. It carries out the reaction 5-methylsulfanyl-2,3-dioxopentyl phosphate + H2O = 1,2-dihydroxy-5-(methylsulfanyl)pent-1-en-3-one + phosphate. Its pathway is amino-acid biosynthesis; L-methionine biosynthesis via salvage pathway; L-methionine from S-methyl-5-thio-alpha-D-ribose 1-phosphate: step 3/6. It participates in amino-acid biosynthesis; L-methionine biosynthesis via salvage pathway; L-methionine from S-methyl-5-thio-alpha-D-ribose 1-phosphate: step 4/6. In terms of biological role, bifunctional enzyme that catalyzes the enolization of 2,3-diketo-5-methylthiopentyl-1-phosphate (DK-MTP-1-P) into the intermediate 2-hydroxy-3-keto-5-methylthiopentenyl-1-phosphate (HK-MTPenyl-1-P), which is then dephosphorylated to form the acireductone 1,2-dihydroxy-3-keto-5-methylthiopentene (DHK-MTPene). The sequence is that of Enolase-phosphatase E1 from Scheffersomyces stipitis (strain ATCC 58785 / CBS 6054 / NBRC 10063 / NRRL Y-11545) (Yeast).